The sequence spans 203 residues: Non-specific lipid transfer protein GPI-anchored 20 (203 aa).

Positions 1–21 (MSKIISLVVAMIAVLALPIRG) are cleaved as a signal peptide. 4 cysteine pairs are disulfide-bonded: cysteine 29-cysteine 74, cysteine 40-cysteine 58, cysteine 59-cysteine 99, and cysteine 72-cysteine 108. Residues asparagine 46, asparagine 50, and asparagine 88 are each glycosylated (N-linked (GlcNAc...) asparagine). The disordered stretch occupies residues 119–182 (GPAATFGPSM…TSRPSETPSS (64 aa)). Polar residues-rich tracts occupy residues 144 to 156 (AAQT…TRPF) and 169 to 179 (DGGSTSRPSET). Residue serine 172 is the site of GPI-anchor amidated serine attachment. Residues 173-203 (TSRPSETPSSAYALSPSLLFFSIALVALKFY) constitute a propeptide, removed in mature form.

The protein belongs to the plant LTP family. As to expression, expressed in seedlings, preferentially in hypocotyls and roots. Also observed in siliques and sepals.

The protein localises to the cell membrane. Functionally, probable lipid transfer protein. The chain is Non-specific lipid transfer protein GPI-anchored 20 from Arabidopsis thaliana (Mouse-ear cress).